The primary structure comprises 284 residues: Halorhodopsin (284 aa).

Topologically, residues 1–30 (MIETAAADILAGGMVPLEMTQTQIFEAVQS) are extracellular. Residues 31–56 (DTLLASSLWINIALAGLSILLFVYMG) traverse the membrane as a helical segment. Over 57–62 (RNVEDP) the chain is Cytoplasmic. The chain crosses the membrane as a helical span at residues 63–86 (RAQLIFVATLMVPLVSISSYTGLV). Over 87–110 (SGLTVSFLEMPAGHALAGQEVLTP) the chain is Extracellular. A helical membrane pass occupies residues 111–132 (WGRYLTWALSTPMILIAVGLLA). Topologically, residues 133–135 (GSN) are cytoplasmic. The helical transmembrane segment at 136-159 (TTKLFTAVVADIGMCVTGLAAALT) threads the bilayer. The Extracellular segment spans residues 160–162 (TSS). The helical transmembrane segment at 163–185 (YLLRWVWYAISCAFFVVVLYILL) threads the bilayer. Topologically, residues 186-197 (AEWAEDAEIAGT) are cytoplasmic. A helical transmembrane segment spans residues 198–221 (ADIFNTLKVLTVVLWLGYPIFWAL). At 222–230 (GAEGLAVLD) the chain is on the extracellular side. The chain crosses the membrane as a helical span at residues 231–259 (VAITSWAYSGMDIVAKYLFAFLLLRWVVN). Lys246 carries the N6-(retinylidene)lysine modification. The Cytoplasmic segment spans residues 260 to 284 (NERTVADVASGLGSGSRGGAAPADD).

It belongs to the archaeal/bacterial/fungal opsin family.

The protein resides in the cell membrane. In terms of biological role, light-driven chloride pump. The sequence is that of Halorhodopsin (hop) from Halobacterium sp. (strain SG1).